Here is a 145-residue protein sequence, read N- to C-terminus: Acidic phospholipase A2 S1-11 (145 aa).

A signal peptide spans 1-19; sequence MYPAHLLVLLAVCVSLLGA. The propeptide occupies 20–27; the sequence is SDMPPQPL. Disulfide bonds link Cys-38–Cys-99, Cys-54–Cys-144, Cys-56–Cys-72, Cys-71–Cys-127, and Cys-106–Cys-118. 3 residues coordinate Ca(2+): Tyr-55, Gly-57, and Gly-59. Residue His-75 is part of the active site. Residue Asp-76 participates in Ca(2+) binding. Residue Asp-121 is part of the active site.

Belongs to the phospholipase A2 family. Group I subfamily. D49 sub-subfamily. Requires Ca(2+) as cofactor. Post-translationally, this enzyme lacks two of the seven disulfide bonds found in similar PLA2 proteins. In terms of tissue distribution, expressed by the venom gland.

It localises to the secreted. It carries out the reaction a 1,2-diacyl-sn-glycero-3-phosphocholine + H2O = a 1-acyl-sn-glycero-3-phosphocholine + a fatty acid + H(+). Snake venom phospholipase A2 (PLA2) that inhibits collagen-induced platelet aggregation. PLA2 catalyzes the calcium-dependent hydrolysis of the 2-acyl groups in 3-sn-phosphoglycerides. The sequence is that of Acidic phospholipase A2 S1-11 from Austrelaps superbus (Lowland copperhead snake).